The primary structure comprises 323 residues: Pathogenicity locus probable regulatory protein WtsA (323 aa).

The Sigma-54 factor interaction domain maps to 41 to 251; that stretch reads VAPLEIDLVL…ELKTAAKRFT (211 aa). Residues 52–59 and 123–132 each bind ATP; these read GETGTGKD and EIDSMPLSLQ. Residues 293–312 constitute a DNA-binding region (H-T-H motif); that stretch reads IDEAAMELGMPLRTLYHRIK.

Functionally, positive activator of wtsB involved in plant pathogenicity. Probably interacts with sigma-54. The polypeptide is Pathogenicity locus probable regulatory protein WtsA (wtsA) (Pantoea stewartii subsp. stewartii (Erwinia stewartii)).